Reading from the N-terminus, the 330-residue chain is D-lactate dehydrogenase (330 aa).

Residues Arg-155–Ile-156, Asp-175, Met-206–Pro-207, Asn-212, Met-233–Arg-235, and Asp-259 contribute to the NAD(+) site. Arg-235 is a catalytic residue. Residue Glu-264 is part of the active site. The active-site Proton donor is His-296.

It belongs to the D-isomer specific 2-hydroxyacid dehydrogenase family.

The catalysed reaction is (R)-lactate + NAD(+) = pyruvate + NADH + H(+). The polypeptide is D-lactate dehydrogenase (ldhD) (Streptococcus agalactiae serotype V (strain ATCC BAA-611 / 2603 V/R)).